Here is an 89-residue protein sequence, read N- to C-terminus: Neuropeptide S (89 aa).

The N-terminal stretch at 1-23 (MIGSLKLSFVLALSLSVMHVLWC) is a signal peptide. The propeptide occupies 24–69 (YPVLSSKVPGKPDYFLILLSSCPARLEGSDRLAFLKPILEKTSMKR).

Its subcellular location is the secreted. Functionally, may play an important anorexigenic role. Modulates arousal and anxiety as well as increases locomotor activity. Binds to its receptor NPSR1 with nanomolar affinity to increase intracellular calcium concentrations. The protein is Neuropeptide S (Nps) of Mus musculus (Mouse).